A 99-amino-acid chain; its full sequence is MMALTKIEIAENLIEKFGLEKRVANEFVELFFEEIRSSLENGEEVKLSGFGNFSLREKKARPGRNPKTGENVAVSARRVVVFKAGQKLRERVEQASSQS.

The protein belongs to the bacterial histone-like protein family. Heterodimer of an alpha and a beta chain.

Functionally, this protein is one of the two subunits of integration host factor, a specific DNA-binding protein that functions in genetic recombination as well as in transcriptional and translational control. The sequence is that of Integration host factor subunit alpha (ihfA) from Mannheimia haemolytica (Pasteurella haemolytica).